A 263-amino-acid polypeptide reads, in one-letter code: Acetylglutamate kinase (263 aa).

Substrate-binding positions include Gly-49–Gly-50, Arg-71, and Asn-163.

It belongs to the acetylglutamate kinase family. ArgB subfamily.

The protein localises to the cytoplasm. It catalyses the reaction N-acetyl-L-glutamate + ATP = N-acetyl-L-glutamyl 5-phosphate + ADP. The protein operates within amino-acid biosynthesis; L-arginine biosynthesis; N(2)-acetyl-L-ornithine from L-glutamate: step 2/4. Catalyzes the ATP-dependent phosphorylation of N-acetyl-L-glutamate. This Moritella abyssi protein is Acetylglutamate kinase.